Here is a 362-residue protein sequence, read N- to C-terminus: Phenylalanine--tRNA ligase alpha subunit (362 aa).

Glutamate 263 provides a ligand contact to Mg(2+).

Belongs to the class-II aminoacyl-tRNA synthetase family. Phe-tRNA synthetase alpha subunit type 1 subfamily. Tetramer of two alpha and two beta subunits. Requires Mg(2+) as cofactor.

The protein localises to the cytoplasm. The catalysed reaction is tRNA(Phe) + L-phenylalanine + ATP = L-phenylalanyl-tRNA(Phe) + AMP + diphosphate + H(+). This Caulobacter sp. (strain K31) protein is Phenylalanine--tRNA ligase alpha subunit.